Here is a 617-residue protein sequence, read N- to C-terminus: MSYDYEDLGLVAGLEIHQQLDTETKLFCNCPTERREPEEAVRSFTRYLHPTKSELGELDEAALEESRVDREFEYLAFDTTCLVEEDDEPPHRLDEEALATAMEIATLLDCSVVDQAQVMRKIVVDGSNTSGFQRSTLLATDGEIETDEGAVRIADMLLEEESAARIEEHDDGVTYGLDRLGIPLVEIGTKPDIRTPTQAREAAERIGMLLRSTGKVKRGLGTIRQDVNVSIEEGARVEMKGVQSLDDIDDLVENEVGRQIELLDIAETLRERDAAVGEPRDVTEVFEDTESGVIAGAERVEAVRLDGFDGLVGREIQPDRRLGTELSDHAKRHGAGGIFHTDELPAYGVSEAEVEALRDAVGADAADAVALVAADTDVAETAIEAVADRAETAIEGVPEETRGANEDGTSRYLRPLPGAARMYPETDVPPVEPDPSDIDPPELLTERVDRYQSDLGLDAGLAEQVAYGRYMPVFETAVDRGVDPTTAAGTLASTLTELRRDDVAVENLTDEHLLSVLELVEAGDLPQEGINPALETLADDPSLTAEAAVEEAGLGGVDRETVREAVVEVIERNADQVEAEGMGAFSGLMGECMGQLRGKADGEVVSELLREEIQKRA.

Belongs to the GatB/GatE family. GatE subfamily. In terms of assembly, heterodimer of GatD and GatE.

It carries out the reaction L-glutamyl-tRNA(Gln) + L-glutamine + ATP + H2O = L-glutaminyl-tRNA(Gln) + L-glutamate + ADP + phosphate + H(+). In terms of biological role, allows the formation of correctly charged Gln-tRNA(Gln) through the transamidation of misacylated Glu-tRNA(Gln) in organisms which lack glutaminyl-tRNA synthetase. The reaction takes place in the presence of glutamine and ATP through an activated gamma-phospho-Glu-tRNA(Gln). The GatDE system is specific for glutamate and does not act on aspartate. This Natronomonas pharaonis (strain ATCC 35678 / DSM 2160 / CIP 103997 / JCM 8858 / NBRC 14720 / NCIMB 2260 / Gabara) (Halobacterium pharaonis) protein is Glutamyl-tRNA(Gln) amidotransferase subunit E.